The chain runs to 372 residues: Beta-1,4-galactosyltransferase 2 (372 aa).

The Cytoplasmic segment spans residues 1–15 (MSRLLGGTLERVCKA). Residues 16–36 (VLLLCLLHFLVAVILYFDVYA) form a helical; Signal-anchor for type II membrane protein membrane-spanning segment. Topologically, residues 37–372 (QHLAFFSRFS…GRPPSWPPRG (336 aa)) are lumenal. The interval 56–97 (PAASSSSSSSNCSRPNATASSSGLPEVPSALPGPTAPTLPPC) is disordered. N-linked (GlcNAc...) asparagine glycans are attached at residues Asn-66 and Asn-71. The segment covering 66 to 78 (NCSRPNATASSSG) has biased composition (polar residues). A disulfide bridge links Cys-97 with Cys-139. UDP-alpha-D-galactose contacts are provided by residues 150–154 (PFRHR), 189–191 (FNR), 217–218 (VD), and Trp-278. Cys-211 and Cys-230 form a disulfide bridge. Asp-218 contacts Mn(2+). Residue 280–283 (GEDD) participates in N-acetyl-D-glucosamine binding. Residue His-311 coordinates Mn(2+). A UDP-alpha-D-galactose-binding site is contributed by 311-313 (HDR). Arg-323 provides a ligand contact to N-acetyl-D-glucosamine. Asn-357 is a glycosylation site (N-linked (GlcNAc...) asparagine).

The protein belongs to the glycosyltransferase 7 family. The cofactor is Mn(2+). As to expression, weakly expressed in various tissues. Highest expression in prostate, testis, ovary, intestine, muscle, and in fetal brain.

It localises to the golgi apparatus. The protein localises to the golgi stack membrane. The catalysed reaction is D-glucose + UDP-alpha-D-galactose = lactose + UDP + H(+). It catalyses the reaction an N-acetyl-beta-D-glucosaminyl derivative + UDP-alpha-D-galactose = a beta-D-galactosyl-(1-&gt;4)-N-acetyl-beta-D-glucosaminyl derivative + UDP + H(+). The enzyme catalyses N-acetyl-D-glucosamine + UDP-alpha-D-galactose = beta-D-galactosyl-(1-&gt;4)-N-acetyl-D-glucosamine + UDP + H(+). It functions in the pathway protein modification; protein glycosylation. Functionally, responsible for the synthesis of complex-type N-linked oligosaccharides in many glycoproteins as well as the carbohydrate moieties of glycolipids. Can produce lactose. This Homo sapiens (Human) protein is Beta-1,4-galactosyltransferase 2.